Here is a 696-residue protein sequence, read N- to C-terminus: Potassium voltage-gated channel subfamily KQT member 4 (696 aa).

Residues 1 to 20 form a disordered region; that stretch reads MAEAPPRRLGLGPPPGDAPR. Over 1–97 the chain is Cytoplasmic; sequence MAEAPPRRLG…VYNVLERPRG (97 aa). Arg94 provides a ligand contact to a 1,2-diacyl-sn-glycero-3-phospho-(1D-myo-inositol-4,5-bisphosphate). The helical transmembrane segment at 98-119 threads the bilayer; sequence WAFVYHVFIFLLVFSCLVLSVL. The Extracellular portion of the chain corresponds to 120-130; it reads STIQEHQELAN. The chain crosses the membrane as a helical span at residues 131–153; it reads ECLLILEFVMIVVFGLEYIIRVW. At 154 to 169 the chain is on the cytoplasmic side; that stretch reads SAGCCCRYRGWQGRFR. A helical transmembrane segment spans residues 170–192; it reads FARKPFCVIDFIVFVASVAVIAA. Lys173 lines the a 1,2-diacyl-sn-glycero-3-phospho-(1D-myo-inositol-4,5-bisphosphate) pocket. Residues 193 to 203 lie on the Extracellular side of the membrane; that stretch reads GTQGNIFATSA. The helical; Voltage-sensor transmembrane segment at 204–224 threads the bilayer; the sequence is LRSMRFLQILRMVRMDRRGGT. A 1,2-diacyl-sn-glycero-3-phospho-(1D-myo-inositol-4,5-bisphosphate)-binding residues include Arg220, Arg221, Lys226, and Ser236. The Cytoplasmic portion of the chain corresponds to 225–236; it reads WKLLGSVVYAHS. Residues 237-259 form a helical membrane-spanning segment; sequence KELITAWYIGFLVLIFASFLVYL. Topologically, residues 260–271 are extracellular; sequence AEKDANSDFSSY. An intramembrane region (pore-forming) is located at residues 272-293; it reads ADSLWWGTITLTTIGYGDKTPH. Position 294 (Thr294) is a topological domain, extracellular. A helical membrane pass occupies residues 295-323; sequence WLGRVLAAGFALLGISFFALPAGILGSGF. The Cytoplasmic portion of the chain corresponds to 324-696; sequence ALKVQEQHRQ…ISRSVSTNMD (373 aa). The a 1,2-diacyl-sn-glycero-3-phospho-(1D-myo-inositol-4,5-bisphosphate) site is built by His331 and Lys334. The interval 343 to 352 is interaction with CALM; sequence AANLIQAAWR. The disordered stretch occupies residues 445-484; that stretch reads SSQKRTGPSKQHLAPPPIPTSPSSEQVGEASSPSKVQKSW. The segment covering 465-484 has biased composition (polar residues); the sequence is SPSSEQVGEASSPSKVQKSW. The interval 536 to 550 is interaction with CALM; that stretch reads RSVRILKFLVAKRKF. Positions 547–651 are C-terminal assembly domain (tetramerization); sequence KRKFKETLRP…SRCLRSGTSA (105 aa). Positions 589 to 609 are disordered; that stretch reads GRGPGDRKTREKGDKGPSDTE. Over residues 592-606 the composition is skewed to basic and acidic residues; that stretch reads PGDRKTREKGDKGPS. Positions 610 to 645 form a coiled coil; the sequence is AVDEISMMGRVVKVEKQVQSIEHKLDLLLGFYSRCL.

The protein belongs to the potassium channel family. KQT (TC 1.A.1.15) subfamily. Kv7.4/KCNQ4 sub-subfamily. As to quaternary structure, homotetramer. Interacts (via C-terminus) with calmodulin; forms a heterooctameric structure (with 4:4 KCNQ1:CALM stoichiometry); the interaction is calcium-independent, constitutive, participates in the proper assembly of a functional channel. The interaction with calcium-free CALM controls channel trafficking whereas interaction with calcium-bound CALM regulates channel gating. May form a functional heteromultimeric channel with KCNQ3. Interacts with HSP90AB1; promotes cell surface expression of KCNQ4. As to expression, in the inner ear expressed in the outer sensory hair cells of the cochlea and in type I hair cells of the vestibular organs. Also expressed in the postsynaptic membrane of the calyx nerve endings innervating type I cells. In the brain expressed in neurons of many, but not all, nuclei of the central auditory pathway. Absent from most other brain regions.

It is found in the basal cell membrane. It carries out the reaction K(+)(in) = K(+)(out). Its activity is regulated as follows. Two molecules of phosphatidylinositol-4,5-bisphosphate (PIP2-I and PIP2-II) are essential to activate KCNQ4 channel by inducing the coupling of the voltage-sensing domain (VSD) and the pore-forming domain (PD). Upon channel activation, PIP2-I and PIP2-II disrupt the VSD-calmodulin/CALM interaction, causing the release of CALM from the VSD which triggers the opening of the gate. Calcium suppresses KCNQ4 channel current through calcium-bound CALM C-terminus. Therefore CALM acts as calcium sensor that controls channel activity. Its function is as follows. Pore-forming subunit of the voltage-gated potassium (Kv) channel involved in the regulation of sensory cells excitability in the cochlea. KCNQ4/Kv7.4 channel is composed of 4 pore-forming subunits assembled as tetramers. Promotes the outflow of potassium ions in the repolarization phase of action potential which plays a role in regulating membrane potential of excitable cells. The channel conducts a slowly activating and deactivating current. Current often shows some inward rectification at positive potentials. Channel may be selectively permeable in vitro to other cations besides potassium, in decreasing order of affinity K(+) = Rb(+) &gt; Cs(+) &gt; Na(+). Important for normal physiological function of inner ear such as sensory perception of sound. The chain is Potassium voltage-gated channel subfamily KQT member 4 from Mus musculus (Mouse).